The primary structure comprises 382 residues: Dual-specificity RNA methyltransferase RlmN (382 aa).

The Proton acceptor role is filled by Glu-96. One can recognise a Radical SAM core domain in the interval 102–340 (QNGRGTLCVS…VTVRTTRGDD (239 aa)). An intrachain disulfide couples Cys-109 to Cys-345. Residues Cys-116, Cys-120, and Cys-123 each coordinate [4Fe-4S] cluster. S-adenosyl-L-methionine is bound by residues 170 to 171 (GE), Ser-202, 224 to 226 (SLH), and Asn-302. Cys-345 acts as the S-methylcysteine intermediate in catalysis.

This sequence belongs to the radical SAM superfamily. RlmN family. [4Fe-4S] cluster is required as a cofactor.

It localises to the cytoplasm. It catalyses the reaction adenosine(2503) in 23S rRNA + 2 reduced [2Fe-2S]-[ferredoxin] + 2 S-adenosyl-L-methionine = 2-methyladenosine(2503) in 23S rRNA + 5'-deoxyadenosine + L-methionine + 2 oxidized [2Fe-2S]-[ferredoxin] + S-adenosyl-L-homocysteine. It carries out the reaction adenosine(37) in tRNA + 2 reduced [2Fe-2S]-[ferredoxin] + 2 S-adenosyl-L-methionine = 2-methyladenosine(37) in tRNA + 5'-deoxyadenosine + L-methionine + 2 oxidized [2Fe-2S]-[ferredoxin] + S-adenosyl-L-homocysteine. In terms of biological role, specifically methylates position 2 of adenine 2503 in 23S rRNA and position 2 of adenine 37 in tRNAs. m2A2503 modification seems to play a crucial role in the proofreading step occurring at the peptidyl transferase center and thus would serve to optimize ribosomal fidelity. This Ectopseudomonas mendocina (strain ymp) (Pseudomonas mendocina) protein is Dual-specificity RNA methyltransferase RlmN.